The primary structure comprises 418 residues: Serine hydroxymethyltransferase (418 aa).

(6S)-5,6,7,8-tetrahydrofolate contacts are provided by residues Leu121 and 125-127 (GHL). An N6-(pyridoxal phosphate)lysine modification is found at Lys230. Position 355–357 (355–357 (SPF)) interacts with (6S)-5,6,7,8-tetrahydrofolate.

It belongs to the SHMT family. Homodimer. Pyridoxal 5'-phosphate serves as cofactor.

The protein localises to the cytoplasm. It carries out the reaction (6R)-5,10-methylene-5,6,7,8-tetrahydrofolate + glycine + H2O = (6S)-5,6,7,8-tetrahydrofolate + L-serine. The protein operates within one-carbon metabolism; tetrahydrofolate interconversion. Its pathway is amino-acid biosynthesis; glycine biosynthesis; glycine from L-serine: step 1/1. Its function is as follows. Catalyzes the reversible interconversion of serine and glycine with tetrahydrofolate (THF) serving as the one-carbon carrier. This reaction serves as the major source of one-carbon groups required for the biosynthesis of purines, thymidylate, methionine, and other important biomolecules. Also exhibits THF-independent aldolase activity toward beta-hydroxyamino acids, producing glycine and aldehydes, via a retro-aldol mechanism. This is Serine hydroxymethyltransferase from Streptococcus pyogenes serotype M3 (strain ATCC BAA-595 / MGAS315).